The sequence spans 482 residues: UDP-N-acetylmuramate--L-alanine ligase (482 aa).

Position 129–135 (129–135) interacts with ATP; that stretch reads GTHGKTT.

Belongs to the MurCDEF family.

Its subcellular location is the cytoplasm. The catalysed reaction is UDP-N-acetyl-alpha-D-muramate + L-alanine + ATP = UDP-N-acetyl-alpha-D-muramoyl-L-alanine + ADP + phosphate + H(+). It participates in cell wall biogenesis; peptidoglycan biosynthesis. Cell wall formation. This is UDP-N-acetylmuramate--L-alanine ligase from Acinetobacter baylyi (strain ATCC 33305 / BD413 / ADP1).